The chain runs to 61 residues: Photosystem II reaction center protein Z (61 aa).

2 helical membrane-spanning segments follow: residues 8–28 (ALLV…VLFS) and 41–61 (LVGS…SFFK).

Belongs to the PsbZ family. PSII is composed of 1 copy each of membrane proteins PsbA, PsbB, PsbC, PsbD, PsbE, PsbF, PsbH, PsbI, PsbJ, PsbK, PsbL, PsbM, PsbT, PsbX, PsbY, PsbZ, Psb30/Ycf12, peripheral proteins PsbO, CyanoQ (PsbQ), PsbU, PsbV and a large number of cofactors. It forms dimeric complexes.

The protein localises to the cellular thylakoid membrane. May control the interaction of photosystem II (PSII) cores with the light-harvesting antenna, regulates electron flow through the 2 photosystem reaction centers. PSII is a light-driven water plastoquinone oxidoreductase, using light energy to abstract electrons from H(2)O, generating a proton gradient subsequently used for ATP formation. The sequence is that of Photosystem II reaction center protein Z from Synechococcus sp. (strain JA-3-3Ab) (Cyanobacteria bacterium Yellowstone A-Prime).